The following is a 487-amino-acid chain: Transcription factor GTE5, chloroplastic (487 aa).

The N-terminal 32 residues, 1–32, are a transit peptide targeting the chloroplast; that stretch reads MSSEHISGGGASKTKKHKWSSSQNRPKPMGVS. 3 disordered regions span residues 1 to 48, 93 to 127, and 400 to 487; these read MSSE…NSFA, ANPGGSMAKSGVVGRSKKVKTGNGGGKKSGHGADK, and KNEA…DNGN. The region spanning 127–233 is the Bromo domain; sequence KGTVQIFKNC…NMFEDKWVSI (107 aa). Residues 320 to 401 form the NET domain; the sequence is EEEAPVNNRD…GYKESLSKKN (82 aa). A compositionally biased stretch (basic and acidic residues) spans 400–414; the sequence is KNEAHGFGSERDAES. Residues 415–435 are compositionally biased toward polar residues; the sequence is VHNSIQEPTTLVSGTTTSRVT. Low complexity predominate over residues 451 to 487; it reads NNASGSSSSNSSSSDSGSCSSDTDSDSSSGRGSDNGN.

Interacts with SIZ1 (via PHD domain). Sumoylated by SIZ1.

It is found in the plastid. The protein resides in the chloroplast. The polypeptide is Transcription factor GTE5, chloroplastic (GTE5) (Arabidopsis thaliana (Mouse-ear cress)).